A 109-amino-acid chain; its full sequence is Parvalbumin beta (109 aa).

An N-acetylalanine modification is found at alanine 2. Residues 22-41 are igE-binding; that stretch reads AGSFDHKKFFKACGLSGKST. 2 EF-hand domains span residues 39–74 and 78–109; these read KSTD…FKAG and LSDA…MIKG. 11 residues coordinate Ca(2+): aspartate 52, aspartate 54, serine 56, phenylalanine 58, glutamate 60, glutamate 63, aspartate 91, aspartate 93, aspartate 95, lysine 97, and glutamate 102.

This sequence belongs to the parvalbumin family. Post-translationally, the N-terminus is blocked. As to expression, expressed in both white and dark muscles (at protein level). About eight and a half times lower expression in the dark muscle than in the white muscle (at protein level).

In muscle, parvalbumin is thought to be involved in relaxation after contraction. It binds two calcium ions. The sequence is that of Parvalbumin beta from Scomber japonicus (Chub mackerel).